An 870-amino-acid chain; its full sequence is DNA-directed RNA polymerase subunit Rpo1N (870 aa).

C60, C63, C70, H73, C100, C103, C146, and C149 together coordinate Zn(2+). The Mg(2+) site is built by D451, D453, and D455.

This sequence belongs to the RNA polymerase beta' chain family. Part of the RNA polymerase complex. The cofactor is Mg(2+). Zn(2+) is required as a cofactor.

It localises to the cytoplasm. It catalyses the reaction RNA(n) + a ribonucleoside 5'-triphosphate = RNA(n+1) + diphosphate. Functionally, DNA-dependent RNA polymerase (RNAP) catalyzes the transcription of DNA into RNA using the four ribonucleoside triphosphates as substrates. Forms the clamp head domain. The chain is DNA-directed RNA polymerase subunit Rpo1N from Methanothermobacter thermautotrophicus (strain ATCC 29096 / DSM 1053 / JCM 10044 / NBRC 100330 / Delta H) (Methanobacterium thermoautotrophicum).